The sequence spans 165 residues: REP-associated tyrosine transposase (165 aa).

It belongs to the transposase 17 family. RAYT subfamily. In terms of assembly, monomer.

Its activity is regulated as follows. Cleavage occurs in the presence of magnesium, but is much more pronounced with manganese. Functionally, transposase that is always flanked by repeated extragenic palindrome (REP) sequences, which are clustered in structures called bacterial interspersed mosaic elements (BIMEs). RayT catalyzes cleavage and recombination of BIMEs. Binds REP sequences and cleaves BIMEs both upstream and downstream of the REP sequence. Could be important in the creation of BIME variability and amplification. This is REP-associated tyrosine transposase from Escherichia coli (strain K12).